The primary structure comprises 835 residues: Protein translocase subunit SecA (835 aa).

ATP contacts are provided by residues Q85, 103–107 (GEGKT), and D492. Positions 788–807 (VQGEAVHPSSDGEEAKKKPV) are disordered. C819, C821, C830, and C831 together coordinate Zn(2+).

It belongs to the SecA family. As to quaternary structure, monomer and homodimer. Part of the essential Sec protein translocation apparatus which comprises SecA, SecYEG and auxiliary proteins SecDF. Other proteins may also be involved. Zn(2+) is required as a cofactor.

The protein resides in the cell membrane. The protein localises to the cytoplasm. It carries out the reaction ATP + H2O + cellular proteinSide 1 = ADP + phosphate + cellular proteinSide 2.. Its function is as follows. Part of the Sec protein translocase complex. Interacts with the SecYEG preprotein conducting channel. Has a central role in coupling the hydrolysis of ATP to the transfer of proteins into and across the cell membrane, serving as an ATP-driven molecular motor driving the stepwise translocation of polypeptide chains across the membrane. This Bacillus cereus (strain ATCC 14579 / DSM 31 / CCUG 7414 / JCM 2152 / NBRC 15305 / NCIMB 9373 / NCTC 2599 / NRRL B-3711) protein is Protein translocase subunit SecA.